The sequence spans 1216 residues: Probable phospholipid-transporting ATPase 4 (1216 aa).

At 1–74 (MARGRIRSKL…TTRYNLITFF (74 aa)) the chain is on the cytoplasmic side. Residues 75–96 (PKCLYEQFHRAANFYFLVAAIL) form a helical membrane-spanning segment. Topologically, residues 97–100 (SVFP) are extracellular. A helical transmembrane segment spans residues 101–123 (LSPFNKWSMIAPLVFVVGLSMLK). At 124–305 (EALEDWSRFM…SRIEKTMDYI (182 aa)) the chain is on the cytoplasmic side. The chain crosses the membrane as a helical span at residues 306-327 (IYTLLVLLILISCISSSGFAWE). The Extracellular portion of the chain corresponds to 328–359 (TKFHMPKWWYLRPEEPENLTNPSNPVYAGFVH). The chain crosses the membrane as a helical span at residues 360-377 (LITALLLYGYLIPISLYV). The Cytoplasmic portion of the chain corresponds to 378-922 (SIEVVKVLQA…HGHWCYKRIA (545 aa)). Asp425 functions as the 4-aspartylphosphate intermediate in the catalytic mechanism. A Glycyl lysine isopeptide (Lys-Gly) (interchain with G-Cter in ubiquitin) cross-link involves residue Lys605. Mg(2+) is bound by residues Asp867 and Asp871. Residues 923–942 (QMICYFFYKNIAFGLTLFYF) traverse the membrane as a helical segment. Residues 943–956 (EAFTGFSGQSVYND) are Extracellular-facing. A helical membrane pass occupies residues 957–976 (YYLLLFNVVLTSLPVIALGV). Residues 977–1006 (FEQDVSSEICLQFPALYQQGKKNLFFDWYR) lie on the Cytoplasmic side of the membrane. The helical transmembrane segment at 1007-1029 (ILGWMGNGVYSSLVIFFLNIGII) threads the bilayer. Residues 1030–1042 (YEQAFRVSGQTAD) are Extracellular-facing. A helical transmembrane segment spans residues 1043 to 1065 (MDAVGTTMFTCIIWAVNVQIALT). At 1066–1071 (VSHFTW) the chain is on the cytoplasmic side. Residues 1072–1092 (IQHVLIWGSIGLWYLFVALYG) form a helical membrane-spanning segment. Residues 1093–1109 (MMPPSLSGNIYRILVEI) are Extracellular-facing. The chain crosses the membrane as a helical span at residues 1110–1134 (LAPAPIYWIATFLVTVTTVLPYFAH). The Cytoplasmic portion of the chain corresponds to 1135 to 1216 (ISFQRFLHPL…TQDTMSPRSV (82 aa)). A disordered region spans residues 1195-1216 (LNKKQSNMSQFSTQDTMSPRSV). Residues 1198–1216 (KQSNMSQFSTQDTMSPRSV) show a composition bias toward polar residues.

This sequence belongs to the cation transport ATPase (P-type) (TC 3.A.3) family. Type IV subfamily.

The protein localises to the membrane. It catalyses the reaction ATP + H2O + phospholipidSide 1 = ADP + phosphate + phospholipidSide 2.. In terms of biological role, involved in transport of phospholipids. In Arabidopsis thaliana (Mouse-ear cress), this protein is Probable phospholipid-transporting ATPase 4.